A 251-amino-acid chain; its full sequence is NADPH-dependent oxidoreductase (251 aa).

It belongs to the flavin oxidoreductase frp family. FMN is required as a cofactor.

Functionally, reduces FMN, organic nitro compounds and disulfide DTNB. Involved in maintenance of the cellular redox state and the disulfide stress response. This chain is NADPH-dependent oxidoreductase (nfrA), found in Staphylococcus epidermidis (strain ATCC 35984 / DSM 28319 / BCRC 17069 / CCUG 31568 / BM 3577 / RP62A).